Reading from the N-terminus, the 82-residue chain is Sulfur carrier protein TusA (82 aa).

The active-site Cysteine persulfide intermediate is C19.

Belongs to the sulfur carrier protein TusA family.

The protein localises to the cytoplasm. Functionally, sulfur carrier protein which probably makes part of a sulfur-relay system. This chain is Sulfur carrier protein TusA, found in Vibrio parahaemolyticus serotype O3:K6 (strain RIMD 2210633).